The following is a 167-amino-acid chain: NAD(P)H-quinone oxidoreductase subunit I, chloroplastic (167 aa).

4Fe-4S ferredoxin-type domains lie at 55–84 and 95–124; these read GRIH…VDWK and LNYS…MTEE. [4Fe-4S] cluster-binding residues include C64, C67, C70, C74, C104, C107, C110, and C114.

It belongs to the complex I 23 kDa subunit family. In terms of assembly, NDH is composed of at least 16 different subunits, 5 of which are encoded in the nucleus. It depends on [4Fe-4S] cluster as a cofactor.

Its subcellular location is the plastid. It is found in the chloroplast thylakoid membrane. The enzyme catalyses a plastoquinone + NADH + (n+1) H(+)(in) = a plastoquinol + NAD(+) + n H(+)(out). The catalysed reaction is a plastoquinone + NADPH + (n+1) H(+)(in) = a plastoquinol + NADP(+) + n H(+)(out). Functionally, NDH shuttles electrons from NAD(P)H:plastoquinone, via FMN and iron-sulfur (Fe-S) centers, to quinones in the photosynthetic chain and possibly in a chloroplast respiratory chain. The immediate electron acceptor for the enzyme in this species is believed to be plastoquinone. Couples the redox reaction to proton translocation, and thus conserves the redox energy in a proton gradient. The protein is NAD(P)H-quinone oxidoreductase subunit I, chloroplastic of Solanum tuberosum (Potato).